Reading from the N-terminus, the 532-residue chain is Pentatricopeptide repeat-containing protein At5g66500, mitochondrial (532 aa).

A mitochondrion-targeting transit peptide spans M1–F33. PPR repeat units follow at residues D48 to L82, S83 to T117, G118 to K148, D149 to I183, S184 to L218, T223 to H248, D250 to N280, V281 to S314, D315 to K345, S346 to V380, N383 to K413, and G419 to S453. The interval I458–I532 is type E motif; degenerate.

It belongs to the PPR family. PCMP-E subfamily.

The protein resides in the mitochondrion. This Arabidopsis thaliana (Mouse-ear cress) protein is Pentatricopeptide repeat-containing protein At5g66500, mitochondrial (PCMP-E38).